A 280-amino-acid polypeptide reads, in one-letter code: DegV domain-containing protein Mb2440c (280 aa).

The DegV domain occupies 3–274 (VVVVTDTSCR…AGAVGVCVDV (272 aa)). Ser-89 lines the hexadecanoate pocket.

Functionally, may bind long-chain fatty acids, such as palmitate, and may play a role in lipid transport or fatty acid metabolism. In Mycobacterium bovis (strain ATCC BAA-935 / AF2122/97), this protein is DegV domain-containing protein Mb2440c.